The primary structure comprises 165 residues: Protein SprT (165 aa).

In terms of domain architecture, SprT-like spans 20–163 (EKLTQANLKL…RCVHCGEQLV (144 aa)). A Zn(2+)-binding site is contributed by H78. E79 is an active-site residue. Residue H82 coordinates Zn(2+).

It belongs to the SprT family. Requires Zn(2+) as cofactor.

Its subcellular location is the cytoplasm. This Escherichia coli O139:H28 (strain E24377A / ETEC) protein is Protein SprT.